Here is a 323-residue protein sequence, read N- to C-terminus: Acetyl-coenzyme A carboxylase carboxyl transferase subunit alpha (323 aa).

Residues 39 to 293 (RLSKKSQQLT…RRALADSLRQ (255 aa)) form the CoA carboxyltransferase C-terminal domain.

It belongs to the AccA family. As to quaternary structure, acetyl-CoA carboxylase is a heterohexamer composed of biotin carboxyl carrier protein (AccB), biotin carboxylase (AccC) and two subunits each of ACCase subunit alpha (AccA) and ACCase subunit beta (AccD).

It is found in the cytoplasm. It carries out the reaction N(6)-carboxybiotinyl-L-lysyl-[protein] + acetyl-CoA = N(6)-biotinyl-L-lysyl-[protein] + malonyl-CoA. Its pathway is lipid metabolism; malonyl-CoA biosynthesis; malonyl-CoA from acetyl-CoA: step 1/1. In terms of biological role, component of the acetyl coenzyme A carboxylase (ACC) complex. First, biotin carboxylase catalyzes the carboxylation of biotin on its carrier protein (BCCP) and then the CO(2) group is transferred by the carboxyltransferase to acetyl-CoA to form malonyl-CoA. The polypeptide is Acetyl-coenzyme A carboxylase carboxyl transferase subunit alpha (Paraburkholderia phytofirmans (strain DSM 17436 / LMG 22146 / PsJN) (Burkholderia phytofirmans)).